The primary structure comprises 85 residues: Toxin BmKaIT1 (85 aa).

The first 19 residues, 1-19, serve as a signal peptide directing secretion; the sequence is MNYLVMISFAFLLMTGVES. Residues 21 to 83 form the LCN-type CS-alpha/beta domain; the sequence is RDAYIAQNYN…VPIRVPGKCH (63 aa). Intrachain disulfides connect C31-C82, C35-C55, C41-C65, and C45-C67. The propeptide at 84 to 85 is removed by a carboxypeptidase; that stretch reads RR.

The protein belongs to the long (4 C-C) scorpion toxin superfamily. Sodium channel inhibitor family. Alpha subfamily. Expressed by the venom gland.

The protein localises to the secreted. Its function is as follows. Alpha toxins bind voltage-independently at site-3 of sodium channels (Nav) and inhibit the inactivation of the activated channels, thereby blocking neuronal transmission. Shows a high toxicity toward insects and moderate toxicity against mammals. The sequence is that of Toxin BmKaIT1 from Olivierus martensii (Manchurian scorpion).